The sequence spans 349 residues: Protein Wnt-7a (349 aa).

Residues methionine 1 to alanine 31 form the signal peptide. Cystine bridges form between cysteine 73/cysteine 84, cysteine 123/cysteine 131, cysteine 133/cysteine 152, cysteine 200/cysteine 214, and cysteine 202/cysteine 209. Residues asparagine 83 and asparagine 127 are each glycosylated (N-linked (GlcNAc...) asparagine). Residue serine 206 is the site of O-palmitoleoyl serine; by PORCN attachment. Residues valine 238–threonine 266 form a disordered linker region. Cystine bridges form between cysteine 278–cysteine 309, cysteine 294–cysteine 304, cysteine 308–cysteine 348, cysteine 324–cysteine 339, cysteine 326–cysteine 336, and cysteine 331–cysteine 332. The N-linked (GlcNAc...) asparagine glycan is linked to asparagine 295.

It belongs to the Wnt family. In terms of assembly, forms a soluble 1:1 complex with AFM; this prevents oligomerization and is required for prolonged biological activity. The complex with AFM may represent the physiological form in body fluids. Interacts with PORCN. Interacts (via intrinsically disordered linker region) with RECK; interaction with RECK confers ligand selectivity for Wnt7 in brain endothelial cells and allows these cells to selectively respond to Wnt7. Interacts with FZD5. In terms of processing, palmitoleoylation is required for efficient binding to frizzled receptors. Depalmitoleoylation leads to Wnt signaling pathway inhibition.

It localises to the secreted. The protein resides in the extracellular space. Its subcellular location is the extracellular matrix. Ligand for members of the frizzled family of seven transmembrane receptors that functions in the canonical Wnt/beta-catenin signaling pathway. Plays an important role in embryonic development, including dorsal versus ventral patterning during limb development, skeleton development and urogenital tract development. Required for central nervous system (CNS) angiogenesis and blood-brain barrier regulation. Required for normal, sexually dimorphic development of the Mullerian ducts, and for normal fertility in both sexes. Required for normal neural stem cell proliferation in the hippocampus dentate gyrus. Required for normal progress through the cell cycle in neural progenitor cells, for self-renewal of neural stem cells, and for normal neuronal differentiation and maturation. Promotes formation of synapses via its interaction with FZD5. The sequence is that of Protein Wnt-7a (WNT7A) from Chlorocebus aethiops (Green monkey).